We begin with the raw amino-acid sequence, 967 residues long: E3 ubiquitin-protein ligase arkadia-C (967 aa).

Disordered regions lie at residues 57–175 (QQID…VSSL) and 193–276 (RKRF…SGGM). Residues 112-131 (SSFSDCISSPSSSSHFGDSD) are compositionally biased toward low complexity. A compositionally biased stretch (polar residues) spans 149-160 (GINSTPRTQSAR). The span at 232–251 (SSSSSSENDLSSESSSSSST) shows a compositional bias: low complexity. The SUMO interaction motif 1 (SIM) signature appears at 280–284 (VVVIE). The SUMO interaction motif 2 (SIM) motif lies at 305 to 311 (EVEIVTV). The disordered stretch occupies residues 321–343 (LGHPRSHWGQNSQSGRTQEHRTR). Residues 360 to 364 (VVDLT) carry the SUMO interaction motif 3 (SIM) motif. Disordered regions lie at residues 368-452 (DDPT…MPRL), 482-548 (HSHH…LSNN), 629-657 (LHHQ…MDYV), and 669-689 (PSLT…LSTA). The span at 385–395 (VSTVSSNTSTS) shows a compositional bias: low complexity. The span at 482 to 498 (HSHHFPHHHHHHHHHSS) shows a compositional bias: basic residues. Residues 629–642 (LHHQTSACPHSNPA) are compositionally biased toward polar residues. Residues 643-654 (SQPPPPPPPPPM) show a composition bias toward pro residues. The tract at residues 880–882 (YPH) is ubiquitin binding. Zn(2+)-binding residues include Cys915 and Cys918. The RING-type; atypical zinc-finger motif lies at 915-956 (CTICLSILEEGEDVRRLPCMHLFHQVCVDQWLITNKKCPICR). A ubiquitin binding region spans residues 930 to 934 (RLPCM). Residues His938 and Cys941 each coordinate Zn(2+).

It belongs to the Arkadia family. Monomer.

It is found in the nucleus. The protein localises to the cytoplasm. Its subcellular location is the PML body. The catalysed reaction is S-ubiquitinyl-[E2 ubiquitin-conjugating enzyme]-L-cysteine + [acceptor protein]-L-lysine = [E2 ubiquitin-conjugating enzyme]-L-cysteine + N(6)-ubiquitinyl-[acceptor protein]-L-lysine.. It functions in the pathway protein modification; protein ubiquitination. Binds free ubiquitin non-covalently via its RING-type zinc finger. Ubiquitin-binding leads to enhance the E3 ubiquitin-protein ligase activity by stabilizing the ubiquitin-conjugating enzyme E2 (donor ubiquitin) in the 'closed' conformation and activating ubiquitin transfer. In terms of biological role, E3 ubiquitin-protein ligase required for mesoderm patterning during embryonic development. Acts as an enhancer of the transcriptional responses of the smad2/smad3 effectors, which are activated downstream of BMP. Acts by mediating ubiquitination and degradation of SMAD inhibitors such as smad7, inducing their proteasomal degradation and thereby enhancing the transcriptional activity of TGF-beta and BMP. Specifically binds polysumoylated chains via SUMO interaction motifs (SIMs) and mediates ubiquitination of sumoylated substrates. The regulation of the BMP-SMAD signaling is however independent of sumoylation and is not dependent of SUMO interaction motifs (SIMs). This Xenopus laevis (African clawed frog) protein is E3 ubiquitin-protein ligase arkadia-C (rnf111-c).